We begin with the raw amino-acid sequence, 598 residues long: NADH-quinone oxidoreductase subunit C/D (598 aa).

Residues 1 to 188 (MTDSTTHDAL…DPFVLTKQKE (188 aa)) form an NADH dehydrogenase I subunit C region. The segment at 212 to 598 (DFMFLNLGPN…IDFVMSDVDR (387 aa)) is NADH dehydrogenase I subunit D.

The protein in the N-terminal section; belongs to the complex I 30 kDa subunit family. It in the C-terminal section; belongs to the complex I 49 kDa subunit family. As to quaternary structure, NDH-1 is composed of 13 different subunits. Subunits NuoB, CD, E, F, and G constitute the peripheral sector of the complex.

It localises to the cell inner membrane. The enzyme catalyses a quinone + NADH + 5 H(+)(in) = a quinol + NAD(+) + 4 H(+)(out). Functionally, NDH-1 shuttles electrons from NADH, via FMN and iron-sulfur (Fe-S) centers, to quinones in the respiratory chain. The immediate electron acceptor for the enzyme in this species is believed to be ubiquinone. Couples the redox reaction to proton translocation (for every two electrons transferred, four hydrogen ions are translocated across the cytoplasmic membrane), and thus conserves the redox energy in a proton gradient. The protein is NADH-quinone oxidoreductase subunit C/D of Serratia proteamaculans (strain 568).